Consider the following 200-residue polypeptide: Oligoribonuclease (200 aa).

The region spanning Leu20–Leu183 is the Exonuclease domain. Tyr141 is an active-site residue.

It belongs to the oligoribonuclease family.

The protein resides in the cytoplasm. Its function is as follows. 3'-to-5' exoribonuclease specific for small oligoribonucleotides. The polypeptide is Oligoribonuclease (Burkholderia vietnamiensis (strain G4 / LMG 22486) (Burkholderia cepacia (strain R1808))).